Consider the following 309-residue polypeptide: Malate dehydrogenase (309 aa).

NAD(+) contacts are provided by residues 9-14 and Asp33; that span reads GAGFVG. Positions 82 and 88 each coordinate substrate. NAD(+) is bound by residues Asn95 and 118-120; that span reads VNN. Residues Asn120 and Arg151 each contribute to the substrate site. His175 functions as the Proton acceptor in the catalytic mechanism.

This sequence belongs to the LDH/MDH superfamily. MDH type 3 family.

It catalyses the reaction (S)-malate + NAD(+) = oxaloacetate + NADH + H(+). Functionally, catalyzes the reversible oxidation of malate to oxaloacetate. The chain is Malate dehydrogenase from Chloroflexus aggregans (strain MD-66 / DSM 9485).